A 217-amino-acid chain; its full sequence is uncharacterized protein (217 aa).

In terms of domain architecture, ABC transporter spans 14 to 217 (LAVNNLCIER…NELATEIISL (204 aa)). 46-53 (GEIGSGKT) serves as a coordination point for ATP.

This sequence belongs to the ABC transporter superfamily.

This is an uncharacterized protein from Haemophilus influenzae (strain ATCC 51907 / DSM 11121 / KW20 / Rd).